Consider the following 314-residue polypeptide: tRNA N6-adenosine threonylcarbamoyltransferase (314 aa).

Fe cation is bound by residues His-106, His-110, and Tyr-127. Substrate is bound by residues 127–131 (YVSGA), Asp-159, Gly-172, Glu-176, and Asn-255. Position 283 (Asp-283) interacts with Fe cation.

The protein belongs to the KAE1 / TsaD family. Fe(2+) is required as a cofactor.

The protein resides in the cytoplasm. The catalysed reaction is L-threonylcarbamoyladenylate + adenosine(37) in tRNA = N(6)-L-threonylcarbamoyladenosine(37) in tRNA + AMP + H(+). Functionally, required for the formation of a threonylcarbamoyl group on adenosine at position 37 (t(6)A37) in tRNAs that read codons beginning with adenine. Is probably involved in the transfer of the threonylcarbamoyl moiety of threonylcarbamoyl-AMP (TC-AMP) to the N6 group of A37. The protein is tRNA N6-adenosine threonylcarbamoyltransferase of Nanoarchaeum equitans (strain Kin4-M).